The sequence spans 37 residues: Large ribosomal subunit protein bL36 (37 aa).

This sequence belongs to the bacterial ribosomal protein bL36 family.

The chain is Large ribosomal subunit protein bL36 from Polaromonas naphthalenivorans (strain CJ2).